A 601-amino-acid chain; its full sequence is ATP-dependent lipid A-core flippase (601 aa).

Helical transmembrane passes span 33 to 53 (CVAV…AKLI), 72 to 92 (VSLM…LSEY), 158 to 178 (VIGL…VFLV), 255 to 275 (LGGG…LYVV), and 283 to 303 (TITP…LSPI). In terms of domain architecture, ABC transmembrane type-1 spans 34-315 (VAVVAMIAYA…LSQVVSVMQR (282 aa)). In terms of domain architecture, ABC transporter spans 347–583 (IEYRHVSLVY…RGGYADLYAM (237 aa)). 381-388 (GQSGSGKT) contributes to the ATP binding site.

It belongs to the ABC transporter superfamily. Lipid exporter (TC 3.A.1.106) family. In terms of assembly, homodimer.

It localises to the cell inner membrane. The enzyme catalyses ATP + H2O + lipid A-core oligosaccharideSide 1 = ADP + phosphate + lipid A-core oligosaccharideSide 2.. Involved in lipopolysaccharide (LPS) biosynthesis. Translocates lipid A-core from the inner to the outer leaflet of the inner membrane. Transmembrane domains (TMD) form a pore in the inner membrane and the ATP-binding domain (NBD) is responsible for energy generation. The polypeptide is ATP-dependent lipid A-core flippase (Methylococcus capsulatus (strain ATCC 33009 / NCIMB 11132 / Bath)).